We begin with the raw amino-acid sequence, 373 residues long: Anhydro-N-acetylmuramic acid kinase (373 aa).

12–19 (GTSLDGVD) provides a ligand contact to ATP.

Belongs to the anhydro-N-acetylmuramic acid kinase family.

It catalyses the reaction 1,6-anhydro-N-acetyl-beta-muramate + ATP + H2O = N-acetyl-D-muramate 6-phosphate + ADP + H(+). It participates in amino-sugar metabolism; 1,6-anhydro-N-acetylmuramate degradation. Its pathway is cell wall biogenesis; peptidoglycan recycling. Catalyzes the specific phosphorylation of 1,6-anhydro-N-acetylmuramic acid (anhMurNAc) with the simultaneous cleavage of the 1,6-anhydro ring, generating MurNAc-6-P. Is required for the utilization of anhMurNAc either imported from the medium or derived from its own cell wall murein, and thus plays a role in cell wall recycling. The chain is Anhydro-N-acetylmuramic acid kinase from Salmonella newport (strain SL254).